Consider the following 232-residue polypeptide: Small ribosomal subunit protein uS2 (232 aa).

It belongs to the universal ribosomal protein uS2 family.

The chain is Small ribosomal subunit protein uS2 from Heliobacterium modesticaldum (strain ATCC 51547 / Ice1).